The following is a 95-amino-acid chain: Aspartyl/glutamyl-tRNA(Asn/Gln) amidotransferase subunit C (95 aa).

This sequence belongs to the GatC family. As to quaternary structure, heterotrimer of A, B and C subunits.

The catalysed reaction is L-glutamyl-tRNA(Gln) + L-glutamine + ATP + H2O = L-glutaminyl-tRNA(Gln) + L-glutamate + ADP + phosphate + H(+). It catalyses the reaction L-aspartyl-tRNA(Asn) + L-glutamine + ATP + H2O = L-asparaginyl-tRNA(Asn) + L-glutamate + ADP + phosphate + 2 H(+). Functionally, allows the formation of correctly charged Asn-tRNA(Asn) or Gln-tRNA(Gln) through the transamidation of misacylated Asp-tRNA(Asn) or Glu-tRNA(Gln) in organisms which lack either or both of asparaginyl-tRNA or glutaminyl-tRNA synthetases. The reaction takes place in the presence of glutamine and ATP through an activated phospho-Asp-tRNA(Asn) or phospho-Glu-tRNA(Gln). In Dehalococcoides mccartyi (strain ATCC BAA-2100 / JCM 16839 / KCTC 5957 / BAV1), this protein is Aspartyl/glutamyl-tRNA(Asn/Gln) amidotransferase subunit C.